The chain runs to 122 residues: Large ribosomal subunit protein uL18 (122 aa).

This sequence belongs to the universal ribosomal protein uL18 family. Part of the 50S ribosomal subunit; part of the 5S rRNA/L5/L18/L25 subcomplex. Contacts the 5S and 23S rRNAs.

Its function is as follows. This is one of the proteins that bind and probably mediate the attachment of the 5S RNA into the large ribosomal subunit, where it forms part of the central protuberance. The protein is Large ribosomal subunit protein uL18 of Desulfatibacillum aliphaticivorans.